The following is a 156-amino-acid chain: Small ribosomal subunit protein uS7 (156 aa).

The protein belongs to the universal ribosomal protein uS7 family. As to quaternary structure, part of the 30S ribosomal subunit. Contacts proteins S9 and S11.

One of the primary rRNA binding proteins, it binds directly to 16S rRNA where it nucleates assembly of the head domain of the 30S subunit. Is located at the subunit interface close to the decoding center, probably blocks exit of the E-site tRNA. This is Small ribosomal subunit protein uS7 from Bacillus mycoides (strain KBAB4) (Bacillus weihenstephanensis).